A 154-amino-acid polypeptide reads, in one-letter code: 17.8 kDa class I heat shock protein (154 aa).

One can recognise a sHSP domain in the interval 40 to 154 (ESSAFANTRI…PEVKSIEISG (115 aa)).

This sequence belongs to the small heat shock protein (HSP20) family. In terms of assembly, forms oligomeric structures.

The protein localises to the cytoplasm. The protein is 17.8 kDa class I heat shock protein of Solanum lycopersicum (Tomato).